A 183-amino-acid polypeptide reads, in one-letter code: Glutathione-regulated potassium-efflux system ancillary protein KefG (183 aa).

It belongs to the NAD(P)H dehydrogenase (quinone) family. KefG subfamily. Interacts with KefB.

It is found in the cell inner membrane. It catalyses the reaction a quinone + NADH + H(+) = a quinol + NAD(+). It carries out the reaction a quinone + NADPH + H(+) = a quinol + NADP(+). Functionally, regulatory subunit of a potassium efflux system that confers protection against electrophiles. Required for full activity of KefB. The polypeptide is Glutathione-regulated potassium-efflux system ancillary protein KefG (Pectobacterium carotovorum subsp. carotovorum (strain PC1)).